Here is a 233-residue protein sequence, read N- to C-terminus: 2,3,4,5-tetrahydropyridine-2,6-dicarboxylate N-acetyltransferase (233 aa).

It belongs to the transferase hexapeptide repeat family. DapH subfamily.

It catalyses the reaction (S)-2,3,4,5-tetrahydrodipicolinate + acetyl-CoA + H2O = L-2-acetamido-6-oxoheptanedioate + CoA. Its pathway is amino-acid biosynthesis; L-lysine biosynthesis via DAP pathway; LL-2,6-diaminopimelate from (S)-tetrahydrodipicolinate (acetylase route): step 1/3. Catalyzes the transfer of an acetyl group from acetyl-CoA to tetrahydrodipicolinate. The protein is 2,3,4,5-tetrahydropyridine-2,6-dicarboxylate N-acetyltransferase of Thermotoga sp. (strain RQ2).